Consider the following 274-residue polypeptide: Pyrroline-5-carboxylate reductase 3 (274 aa).

An N-acetylalanine modification is found at Ala2.

The protein belongs to the pyrroline-5-carboxylate reductase family. As to quaternary structure, homodecamer; composed of 5 homodimers.

The protein resides in the cytoplasm. It carries out the reaction L-proline + NADP(+) = (S)-1-pyrroline-5-carboxylate + NADPH + 2 H(+). It catalyses the reaction L-proline + NAD(+) = (S)-1-pyrroline-5-carboxylate + NADH + 2 H(+). It functions in the pathway amino-acid biosynthesis; L-proline biosynthesis; L-proline from L-glutamate 5-semialdehyde: step 1/1. Oxidoreductase that catalyzes the last step in proline biosynthesis, which corresponds to the reduction of pyrroline-5-carboxylate (P5C) to L-proline using NAD(P)H. Proline is synthesized from either glutamate or ornithine; both are converted to P5C, and then to proline via pyrroline-5-carboxylate reductases (PYCRs). PYCR3 is exclusively linked to the biosynthesis of proline from ornithine. This Mus musculus (Mouse) protein is Pyrroline-5-carboxylate reductase 3.